A 50-amino-acid chain; its full sequence is Small ribosomal subunit protein uS14 (50 aa).

The Zn(2+) site is built by C15, C18, C33, and C36.

This sequence belongs to the universal ribosomal protein uS14 family. Zinc-binding uS14 subfamily. As to quaternary structure, part of the 30S ribosomal subunit. Requires Zn(2+) as cofactor.

In terms of biological role, binds 16S rRNA, required for the assembly of 30S particles. The polypeptide is Small ribosomal subunit protein uS14 (Methanosarcina acetivorans (strain ATCC 35395 / DSM 2834 / JCM 12185 / C2A)).